The following is an 83-amino-acid chain: Exodeoxyribonuclease 7 small subunit (83 aa).

The segment at Met-1–Glu-25 is disordered.

This sequence belongs to the XseB family. Heterooligomer composed of large and small subunits.

It is found in the cytoplasm. The catalysed reaction is Exonucleolytic cleavage in either 5'- to 3'- or 3'- to 5'-direction to yield nucleoside 5'-phosphates.. Its function is as follows. Bidirectionally degrades single-stranded DNA into large acid-insoluble oligonucleotides, which are then degraded further into small acid-soluble oligonucleotides. The polypeptide is Exodeoxyribonuclease 7 small subunit (Helicobacter pylori (strain P12)).